We begin with the raw amino-acid sequence, 426 residues long: D-amino acid dehydrogenase (426 aa).

An FAD-binding site is contributed by Val3–Trp17.

It belongs to the DadA oxidoreductase family. The cofactor is FAD.

It carries out the reaction a D-alpha-amino acid + A + H2O = a 2-oxocarboxylate + AH2 + NH4(+). It functions in the pathway amino-acid degradation; D-alanine degradation; NH(3) and pyruvate from D-alanine: step 1/1. In terms of biological role, oxidative deamination of D-amino acids. The polypeptide is D-amino acid dehydrogenase (Phenylobacterium zucineum (strain HLK1)).